The sequence spans 165 residues: Nucleotide-binding protein Syncc9902_1708 (165 aa).

The protein belongs to the YajQ family.

Its function is as follows. Nucleotide-binding protein. The sequence is that of Nucleotide-binding protein Syncc9902_1708 from Synechococcus sp. (strain CC9902).